The primary structure comprises 240 residues: 4-hydroxy-tetrahydrodipicolinate reductase (240 aa).

Residues 8–13 (GSTGKM), 78–80 (GTT), and 102–105 (SANM) each bind NAD(+). The Proton donor/acceptor role is filled by H134. H135 lines the (S)-2,3,4,5-tetrahydrodipicolinate pocket. The Proton donor role is filled by K138. 144–145 (GT) provides a ligand contact to (S)-2,3,4,5-tetrahydrodipicolinate.

This sequence belongs to the DapB family.

It localises to the cytoplasm. It carries out the reaction (S)-2,3,4,5-tetrahydrodipicolinate + NAD(+) + H2O = (2S,4S)-4-hydroxy-2,3,4,5-tetrahydrodipicolinate + NADH + H(+). It catalyses the reaction (S)-2,3,4,5-tetrahydrodipicolinate + NADP(+) + H2O = (2S,4S)-4-hydroxy-2,3,4,5-tetrahydrodipicolinate + NADPH + H(+). It functions in the pathway amino-acid biosynthesis; L-lysine biosynthesis via DAP pathway; (S)-tetrahydrodipicolinate from L-aspartate: step 4/4. Functionally, catalyzes the conversion of 4-hydroxy-tetrahydrodipicolinate (HTPA) to tetrahydrodipicolinate. The sequence is that of 4-hydroxy-tetrahydrodipicolinate reductase from Rickettsia canadensis (strain McKiel).